Consider the following 86-residue polypeptide: Small ribosomal subunit protein bS20 (86 aa).

Belongs to the bacterial ribosomal protein bS20 family.

Binds directly to 16S ribosomal RNA. The protein is Small ribosomal subunit protein bS20 of Kineococcus radiotolerans (strain ATCC BAA-149 / DSM 14245 / SRS30216).